A 209-amino-acid chain; its full sequence is Protein ASG7 (209 aa).

Residues Met1–Arg49 lie on the Lumenal side of the membrane. Residues Phe50–Phe70 form a helical membrane-spanning segment. Over Leu71–Asn184 the chain is Cytoplasmic. Residues Ser121, Ser123, and Ser125 each carry the phosphoserine modification. Thr153 carries the post-translational modification Phosphothreonine. A helical transmembrane segment spans residues Leu185–Cys205. The Lumenal segment spans residues Lys206–Arg209.

The protein resides in the endomembrane system. Required for receptor inhibition of inappropriately expressed a-factor receptor (STE3) in MAT a cells. Inhibits signaling by relocalizing the G protein beta-gamma (STE4-STE18) subunit to intracellular membranes. May also be a mechanism for the down-regulation of the mating pheromone response after the zygotic fusion event, promoting the transition of the new diploid cell to vegetative growth. This Saccharomyces cerevisiae (strain YJM789) (Baker's yeast) protein is Protein ASG7 (ASG7).